Here is a 129-residue protein sequence, read N- to C-terminus: Small ribosomal subunit protein uS11 (129 aa).

Belongs to the universal ribosomal protein uS11 family. As to quaternary structure, part of the 30S ribosomal subunit. Interacts with proteins S7 and S18. Binds to IF-3.

Located on the platform of the 30S subunit, it bridges several disparate RNA helices of the 16S rRNA. Forms part of the Shine-Dalgarno cleft in the 70S ribosome. The protein is Small ribosomal subunit protein uS11 of Erwinia tasmaniensis (strain DSM 17950 / CFBP 7177 / CIP 109463 / NCPPB 4357 / Et1/99).